The following is a 264-amino-acid chain: Acyl-[acyl-carrier-protein]--UDP-N-acetylglucosamine O-acyltransferase (264 aa).

The protein belongs to the transferase hexapeptide repeat family. LpxA subfamily. In terms of assembly, homotrimer.

It localises to the cytoplasm. The enzyme catalyses a (3R)-hydroxyacyl-[ACP] + UDP-N-acetyl-alpha-D-glucosamine = a UDP-3-O-[(3R)-3-hydroxyacyl]-N-acetyl-alpha-D-glucosamine + holo-[ACP]. The protein operates within glycolipid biosynthesis; lipid IV(A) biosynthesis; lipid IV(A) from (3R)-3-hydroxytetradecanoyl-[acyl-carrier-protein] and UDP-N-acetyl-alpha-D-glucosamine: step 1/6. Involved in the biosynthesis of lipid A, a phosphorylated glycolipid that anchors the lipopolysaccharide to the outer membrane of the cell. This chain is Acyl-[acyl-carrier-protein]--UDP-N-acetylglucosamine O-acyltransferase, found in Actinobacillus pleuropneumoniae serotype 7 (strain AP76).